The chain runs to 206 residues: Ectodysplasin-A receptor-associated adapter protein (206 aa).

Disordered stretches follow at residues 1-36 (MRPL…DKYP) and 52-77 (TLNC…TGDP). 2 stretches are compositionally biased toward polar residues: residues 24–33 (PSTLSFNTSD) and 52–62 (TLNCPPNSDMK). The Death domain occupies 114–190 (DVIRIKLDPC…DVEKVLRRWV (77 aa)).

In terms of assembly, self-associates and binds to EDAR, TRAF1, TRAF2 and TRAF3.

Its subcellular location is the cytoplasm. In terms of biological role, adapter protein that interacts with EDAR DEATH domain and couples the receptor to EDA signaling pathway during morphogenesis of ectodermal organs. Mediates the activation of NF-kappa-B. In Macaca fascicularis (Crab-eating macaque), this protein is Ectodysplasin-A receptor-associated adapter protein (EDARADD).